Reading from the N-terminus, the 691-residue chain is DNA ligase (691 aa).

NAD(+) contacts are provided by residues 41-45, 90-91, and E130; these read DAEYD and SL. The N6-AMP-lysine intermediate role is filled by K132. NAD(+) contacts are provided by R153, E190, K307, and K331. Positions 425, 428, 443, and 449 each coordinate Zn(2+). In terms of domain architecture, BRCT spans 610-691; sequence APQGVLAGKT…LHQLLEGNTP (82 aa).

It belongs to the NAD-dependent DNA ligase family. LigA subfamily. The cofactor is Mg(2+). Mn(2+) is required as a cofactor.

The catalysed reaction is NAD(+) + (deoxyribonucleotide)n-3'-hydroxyl + 5'-phospho-(deoxyribonucleotide)m = (deoxyribonucleotide)n+m + AMP + beta-nicotinamide D-nucleotide.. In terms of biological role, DNA ligase that catalyzes the formation of phosphodiester linkages between 5'-phosphoryl and 3'-hydroxyl groups in double-stranded DNA using NAD as a coenzyme and as the energy source for the reaction. It is essential for DNA replication and repair of damaged DNA. The sequence is that of DNA ligase from Burkholderia cenocepacia (strain HI2424).